The primary structure comprises 470 residues: Shutoff alkaline exonuclease (470 aa).

It belongs to the herpesviridae alkaline nuclease family. As to quaternary structure, forms a complex with the DNA polymerase, the DNA polymerase processivity factor, and the major DNA binding protein.

Its subcellular location is the host nucleus. The protein localises to the host cytoplasm. Functionally, plays a role in processing non linear or branched viral DNA intermediates in order to promote the production of mature packaged unit-length linear progeny viral DNA molecules. Exhibits endonuclease and exonuclease activities and accepts both double-stranded and single-stranded DNA as substrate. Exonuclease digestion of DNA is in the 5'-&gt; 3' direction and the products are 5'-monophosphate nucleosides. Additionally, forms a recombinase with the major DNA-binding protein, which displays strand exchange activity. Also acts as a cytoplasmic RNA endonuclease that induces degradation of the majority of the cellular messenger RNAs during early lytic infection. The resulting inhibition of cellular protein synthesis serves to ensure maximal viral gene expression and evasion from host immune response. Internally cleaves host mRNAs which are then degraded by the cellular exonuclease XRN1. Bypasses therefore the regulatory steps of deadenylation and decapping normally required for XRN1 activation. In Epstein-Barr virus (strain GD1) (HHV-4), this protein is Shutoff alkaline exonuclease.